The following is a 435-amino-acid chain: Protein GOLM2 (435 aa).

The residue at position 1 (methionine 1) is an N-acetylmethionine. The Cytoplasmic portion of the chain corresponds to 1–14 (MVGFGANRRAGRLP). The chain crosses the membrane as a helical; Signal-anchor for type II membrane protein span at residues 15–35 (SFVLVVLLVVIVVLAFNYWSI). Residues 35–194 (ISSRHVLLQE…DQFLQEQKET (160 aa)) are a coiled coil. At 36–435 (SSRHVLLQEE…YGKQRFSDVL (400 aa)) the chain is on the lumenal side. 2 stretches are compositionally biased toward basic and acidic residues: residues 191–212 (QKETHKIQSNDGKELGRNDHGA) and 223–239 (DANKNEDPSSNHLPHGK). Disordered regions lie at residues 191-239 (QKET…PHGK) and 271-435 (PPVL…SDVL). The residue at position 232 (serine 232) is a Phosphoserine. Polar residues-rich tracts occupy residues 282 to 294 (QTISHLPTGQPLS) and 302 to 320 (HLNQNENPSTSKQNPSNPL). The segment covering 343-361 (ATRDRANDFHKLKQSRFFD) has biased composition (basic and acidic residues). Position 365 is a phosphoserine (serine 365). The segment covering 398–417 (YNEEEDGDGGEEDVQDDEER) has biased composition (acidic residues). Basic and acidic residues predominate over residues 425-435 (DYGKQRFSDVL).

This sequence belongs to the GOLM family.

It localises to the membrane. This Mus musculus (Mouse) protein is Protein GOLM2.